Here is a 366-residue protein sequence, read N- to C-terminus: UDP-N-acetylglucosamine--N-acetylmuramyl-(pentapeptide) pyrophosphoryl-undecaprenol N-acetylglucosamine transferase (366 aa).

UDP-N-acetyl-alpha-D-glucosamine is bound by residues 10–12 (TGG), Asn-124, Arg-165, Ser-195, Ile-250, and Gln-295.

It belongs to the glycosyltransferase 28 family. MurG subfamily.

The protein resides in the cell inner membrane. It carries out the reaction di-trans,octa-cis-undecaprenyl diphospho-N-acetyl-alpha-D-muramoyl-L-alanyl-D-glutamyl-meso-2,6-diaminopimeloyl-D-alanyl-D-alanine + UDP-N-acetyl-alpha-D-glucosamine = di-trans,octa-cis-undecaprenyl diphospho-[N-acetyl-alpha-D-glucosaminyl-(1-&gt;4)]-N-acetyl-alpha-D-muramoyl-L-alanyl-D-glutamyl-meso-2,6-diaminopimeloyl-D-alanyl-D-alanine + UDP + H(+). It functions in the pathway cell wall biogenesis; peptidoglycan biosynthesis. Functionally, cell wall formation. Catalyzes the transfer of a GlcNAc subunit on undecaprenyl-pyrophosphoryl-MurNAc-pentapeptide (lipid intermediate I) to form undecaprenyl-pyrophosphoryl-MurNAc-(pentapeptide)GlcNAc (lipid intermediate II). This is UDP-N-acetylglucosamine--N-acetylmuramyl-(pentapeptide) pyrophosphoryl-undecaprenol N-acetylglucosamine transferase from Thermodesulfovibrio yellowstonii (strain ATCC 51303 / DSM 11347 / YP87).